A 198-amino-acid polypeptide reads, in one-letter code: Peptide deformylase (198 aa).

C123 and H170 together coordinate Fe cation. E171 is a catalytic residue. H174 is a binding site for Fe cation.

This sequence belongs to the polypeptide deformylase family. It depends on Fe(2+) as a cofactor.

It catalyses the reaction N-terminal N-formyl-L-methionyl-[peptide] + H2O = N-terminal L-methionyl-[peptide] + formate. In terms of biological role, removes the formyl group from the N-terminal Met of newly synthesized proteins. Requires at least a dipeptide for an efficient rate of reaction. N-terminal L-methionine is a prerequisite for activity but the enzyme has broad specificity at other positions. In Mycoplasmopsis pulmonis (strain UAB CTIP) (Mycoplasma pulmonis), this protein is Peptide deformylase.